Consider the following 859-residue polypeptide: Glucans biosynthesis glucosyltransferase H (859 aa).

Helical transmembrane passes span 144 to 166, 200 to 222, 523 to 545, 573 to 595, 608 to 630, and 684 to 706; these read YILLILMLGQTIVAGSYMKGILP, LLLFGILFCWVSAGFWTALMGFL, VMSYLSAPLWFFFLVLSTALLAV, VALFSTTIVLLFLPKLLSVILIW, VTVSMLLEMLFSVLLAPVRMLFH, and SFLWWLAPIVVSLMLSIPVSVIS.

It belongs to the glycosyltransferase 2 family. OpgH subfamily.

It is found in the cell inner membrane. The protein operates within glycan metabolism; osmoregulated periplasmic glucan (OPG) biosynthesis. Functionally, involved in the biosynthesis of osmoregulated periplasmic glucans (OPGs). The protein is Glucans biosynthesis glucosyltransferase H of Pseudomonas syringae pv. tomato (strain ATCC BAA-871 / DC3000).